The sequence spans 144 residues: Oxoglutarate dehydrogenase inhibitor (144 aa).

T14 is modified (phosphothreonine). Residues 68-117 (TAAGRHPDSDIFLDDVTVSRRHAEFRRNGDQYEVVDVGSLNGTYVNREPK) form the FHA domain.

The protein resides in the cytoplasm. An essential component of the PknG signaling pathway. When unphosphorylated, it inhibits the activity of 2-oxoglutarate dehydrogenase. When phosphorylated it does not inhibit 2-oxoglutarate dehydrogenase. The chain is Oxoglutarate dehydrogenase inhibitor (odhI) from Corynebacterium jeikeium (strain K411).